Consider the following 484-residue polypeptide: Neuronal acetylcholine receptor subunit alpha-9 (484 aa).

Residues 1–27 form the signal peptide; the sequence is MKRNNLSSFYVSLWLLFTATMLQAVES. Over 28–240 the chain is Extracellular; sequence AKGKYAQMLF…FTLILKRKSS (213 aa). Asparagine 59 is a glycosylation site (N-linked (GlcNAc...) asparagine). Residues cysteine 157 and cysteine 171 are joined by a disulfide bond. Asparagine 172 carries an N-linked (GlcNAc...) asparagine glycan. The Na(+) site is built by serine 193 and aspartate 195. Cysteine 221 and cysteine 222 form a disulfide bridge. 3 helical membrane-spanning segments follow: residues 241-261, 271-291, and 305-325; these read FYIF…PLGF, VSLG…VAEI, and YIAT…IMNV. Residues 326–462 are Cytoplasmic-facing; that stretch reads HHCGSEAKPV…WKKVAKVMDR (137 aa). The tract at residues 364–395 is disordered; the sequence is RREKEQEHRLEGGDMCRGGDGKSHLSSRNDDS. Residues 463–483 traverse the membrane as a helical segment; that stretch reads FFMWIFFIMVFFMSVLIIGKA.

The protein belongs to the ligand-gated ion channel (TC 1.A.9) family. Acetylcholine receptor (TC 1.A.9.1) subfamily. Alpha-9/CHRNA9 sub-subfamily. As to quaternary structure, forms homo- or heteropentameric channels in conjunction with CHRNA10. The native outer hair cell receptor is composed of CHRNA9:CHRNA10 heterooligomers. Found in the stoichiometric form (CHRNA9)2:(CHRNA10)3. As to expression, expressed in hair cells of the cochlea (at protein level). Expressed in hair cells of the cochlea.

The protein resides in the synaptic cell membrane. Its subcellular location is the cell membrane. It catalyses the reaction Ca(2+)(in) = Ca(2+)(out). The enzyme catalyses K(+)(in) = K(+)(out). The catalysed reaction is Na(+)(in) = Na(+)(out). It carries out the reaction Mg(2+)(in) = Mg(2+)(out). Its activity is regulated as follows. Activated by a myriad of ligands such as acetylcholine. AChR activity is inhibited by the antagonist alpha-conotoxins RgIA and GeXXA, small disulfide-constrained peptides from cone snails. Functionally, component of neuronal acetylcholine receptors (nAChRs) that function as pentameric, ligand-gated cation channels with high calcium permeability among other activities. nAChRs are excitatory neurotrasnmitter receptors formed by a collection of nAChR subunits known to mediate synaptic transmission in the nervous system and the neuromuscular junction. Each nAchR subunit confers differential attributes to channel properties, including activation, deactivation and desensitization kinetics, pH sensitivity, cation permeability, and binding to allosteric modulators. Forms either homopentamers or heteropentamers with CHRNA10. Expressed in the inner ear, in sympathetic neurons and in other non-neuronal cells, such as skin keratinocytes and lymphocytes. The channel is permeable to a range of divalent cations including calcium, the influx of which may activate a potassium current which hyperpolarizes the cell membrane. This Gallus gallus (Chicken) protein is Neuronal acetylcholine receptor subunit alpha-9 (CHRNA9).